Here is a 420-residue protein sequence, read N- to C-terminus: MDKFLISGSGPLTGELRISGSKNAALPILAATILAQGKVRLANVPHLNDISTMIALLRTLGLTIEIQGDHVVIVDPNTINSYTAPYELVKTMRASILVLGPLLARYGEANVSFPGGCAIGSRPVDIHLRGLEAMGASIEIDGGYIRARRQGRLKGCHFLMDTVTVGGTENLLMAAVLAEGKTILENAAREPEIVDLANLLVAMGARISGIGTSTLTIEGVESLTGCDYSVMPDRIETGTYLVAAAASRGKVRLTHTSASILEAVIVKLQEAGADVTTGEDWIALDMNGRRPKAVSLKTAPYPAFPTDMQSQFMALNAVADGISHITETIFENRLVQVAELKRMGAHIELEHNTAIVTGVERLKAAPVMASDLRASASLVIAGLVADGETLIDRIYHIDRGYEAIEAKFQALGASVRRIKS.

Residue 22–23 participates in phosphoenolpyruvate binding; the sequence is KN. Position 93 (R93) interacts with UDP-N-acetyl-alpha-D-glucosamine. Catalysis depends on C117, which acts as the Proton donor. C117 is subject to 2-(S-cysteinyl)pyruvic acid O-phosphothioketal. 2 residues coordinate UDP-N-acetyl-alpha-D-glucosamine: D307 and I329.

It belongs to the EPSP synthase family. MurA subfamily.

It localises to the cytoplasm. The catalysed reaction is phosphoenolpyruvate + UDP-N-acetyl-alpha-D-glucosamine = UDP-N-acetyl-3-O-(1-carboxyvinyl)-alpha-D-glucosamine + phosphate. It participates in cell wall biogenesis; peptidoglycan biosynthesis. Its function is as follows. Cell wall formation. Adds enolpyruvyl to UDP-N-acetylglucosamine. This chain is UDP-N-acetylglucosamine 1-carboxyvinyltransferase, found in Cellvibrio japonicus (strain Ueda107) (Pseudomonas fluorescens subsp. cellulosa).